A 378-amino-acid polypeptide reads, in one-letter code: MDASYFAVQRRALEIVGFDPSTPQLSLKHPIWAGILILSLISHNWPMVVYALQDLSDLTRLTDNFAVFMQGSQSTFKFLVMMAKRRRIGSLIHRLHKLNQAASATPNHLEKIERENQLDRYVARSFRNAAYGVICASAIAPMLLGLWGYVETGVFTPTTPMEFNFWLDERKPHFYWPIYVWGVLGVAAAAWLAIATDTLFSWLTHNVVIQFQLLELVLEEKDLNGGDSRLTGFVSRHRIALDLAKELSSIFGEIVFVKYMLSYLQLCMLAFRFSRSGWSAQVPFRATFLVAIIIQLSSYCYGGEYIKQQSLAIAQAVYGQINWPEMTPKKRRLWQMVIMRAQRPAKIFGFMFVVDLPLLLWVIRTAGSFLAMLRTFER.

Topologically, residues 1-30 (MDASYFAVQRRALEIVGFDPSTPQLSLKHP) are cytoplasmic. A helical transmembrane segment spans residues 31 to 51 (IWAGILILSLISHNWPMVVYA). Topologically, residues 52 to 129 (LQDLSDLTRL…RYVARSFRNA (78 aa)) are extracellular. A helical transmembrane segment spans residues 130–150 (AYGVICASAIAPMLLGLWGYV). The Cytoplasmic segment spans residues 151-173 (ETGVFTPTTPMEFNFWLDERKPH). The helical transmembrane segment at 174 to 194 (FYWPIYVWGVLGVAAAAWLAI) threads the bilayer. Residues 195-197 (ATD) lie on the Extracellular side of the membrane. The chain crosses the membrane as a helical span at residues 198–218 (TLFSWLTHNVVIQFQLLELVL). Residues 219-249 (EEKDLNGGDSRLTGFVSRHRIALDLAKELSS) are Cytoplasmic-facing. Residues 250–270 (IFGEIVFVKYMLSYLQLCMLA) form a helical membrane-spanning segment. Residues 271 to 285 (FRFSRSGWSAQVPFR) lie on the Extracellular side of the membrane. The chain crosses the membrane as a helical span at residues 286 to 306 (ATFLVAIIIQLSSYCYGGEYI). Residues 307–342 (KQQSLAIAQAVYGQINWPEMTPKKRRLWQMVIMRAQ) are Cytoplasmic-facing. The helical transmembrane segment at 343 to 363 (RPAKIFGFMFVVDLPLLLWVI) threads the bilayer. Over 364–378 (RTAGSFLAMLRTFER) the chain is Extracellular.

It belongs to the insect chemoreceptor superfamily. Heteromeric odorant receptor channel (TC 1.A.69) family. Or1a subfamily. Interacts with Orco. Complexes exist early in the endomembrane system in olfactory sensory neurons (OSNs), coupling these complexes to the conserved ciliary trafficking pathway.

It is found in the cell membrane. Functionally, odorant receptor which mediates acceptance or avoidance behavior, depending on its substrates. The odorant receptor repertoire encodes a large collection of odor stimuli that vary widely in identity, intensity, and duration. May form a complex with Orco to form odorant-sensing units, providing sensitive and prolonged odorant signaling and calcium permeability. Involved in the behavioral responses to hexanol, pentyl acetate, benzyl acetate, and 2-heptanone. The protein is Odorant receptor 45a (Or45a) of Drosophila melanogaster (Fruit fly).